The sequence spans 424 residues: Histidine--tRNA ligase (424 aa).

This sequence belongs to the class-II aminoacyl-tRNA synthetase family. Homodimer.

It localises to the cytoplasm. The catalysed reaction is tRNA(His) + L-histidine + ATP = L-histidyl-tRNA(His) + AMP + diphosphate + H(+). In Klebsiella pneumoniae (strain 342), this protein is Histidine--tRNA ligase.